Consider the following 441-residue polypeptide: Glutamate--tRNA ligase 1 (441 aa).

Residues 8-18 (PSPTGHIHVGN) carry the 'HIGH' region motif. A 'KMSKS' region motif is present at residues 239–243 (ELSKR). Lys242 serves as a coordination point for ATP.

This sequence belongs to the class-I aminoacyl-tRNA synthetase family. Glutamate--tRNA ligase type 1 subfamily. Monomer.

The protein resides in the cytoplasm. It catalyses the reaction tRNA(Glu) + L-glutamate + ATP = L-glutamyl-tRNA(Glu) + AMP + diphosphate. Catalyzes the attachment of glutamate to tRNA(Glu) in a two-step reaction: glutamate is first activated by ATP to form Glu-AMP and then transferred to the acceptor end of tRNA(Glu). In Paracoccus denitrificans (strain Pd 1222), this protein is Glutamate--tRNA ligase 1.